Here is a 355-residue protein sequence, read N- to C-terminus: Guanine nucleotide-binding protein G(i) subunit alpha-2 (355 aa).

Gly2 carries N-myristoyl glycine lipidation. Cys3 carries S-palmitoyl cysteine lipidation. The region spanning 32-355 (REVKLLLLGA…KNNLKDCGLF (324 aa)) is the G-alpha domain. A G1 motif region spans residues 35–48 (KLLLLGAGESGKST). GTP-binding positions include 40-47 (GAGESGKS), 176-182 (LRTRVKT), 201-205 (DVGGQ), 270-273 (NKKD), and Ala327. The Mg(2+) site is built by Ser47 and Thr182. Residues 174–182 (DVLRTRVKT) are G2 motif. A G3 motif region spans residues 197 to 206 (FKMFDVGGQR). The tract at residues 266–273 (ILFLNKKD) is G4 motif. The tract at residues 325–330 (TCATDT) is G5 motif.

It belongs to the G-alpha family. G(i/o/t/z) subfamily. G proteins are composed of 3 units; alpha, beta and gamma. The alpha chain contains the guanine nucleotide binding site.

It localises to the cytoplasm. Its subcellular location is the cytoskeleton. The protein resides in the microtubule organizing center. It is found in the centrosome. The protein localises to the cell membrane. Its function is as follows. Guanine nucleotide-binding proteins (G proteins) are involved as modulators or transducers in various transmembrane signaling systems. The G(i) proteins are involved in hormonal regulation of adenylate cyclase: they inhibit the cyclase in response to beta-adrenergic stimuli. May play a role in cell division. This chain is Guanine nucleotide-binding protein G(i) subunit alpha-2 (GNAI2), found in Gallus gallus (Chicken).